A 690-amino-acid polypeptide reads, in one-letter code: Elongation factor G (690 aa).

In terms of domain architecture, tr-type G spans lysine 8–leucine 282. Residues alanine 17–threonine 24, aspartate 81–histidine 85, and asparagine 135–aspartate 138 each bind GTP.

This sequence belongs to the TRAFAC class translation factor GTPase superfamily. Classic translation factor GTPase family. EF-G/EF-2 subfamily.

The protein localises to the cytoplasm. Functionally, catalyzes the GTP-dependent ribosomal translocation step during translation elongation. During this step, the ribosome changes from the pre-translocational (PRE) to the post-translocational (POST) state as the newly formed A-site-bound peptidyl-tRNA and P-site-bound deacylated tRNA move to the P and E sites, respectively. Catalyzes the coordinated movement of the two tRNA molecules, the mRNA and conformational changes in the ribosome. The protein is Elongation factor G of Acholeplasma laidlawii (strain PG-8A).